The following is a 1272-amino-acid chain: Vitamin B12-dependent ribonucleotide reductase (1272 aa).

Substrate is bound by residues Ser153, 198 to 199 (AC), Gly230, 474 to 478 (NPCSE), and 675 to 679 (PTGTI). Cysteines 199 and 487 form a disulfide. Asn474 serves as the catalytic Proton acceptor. Catalysis depends on Cys476, which acts as the Cysteine radical intermediate. Glu478 serves as the catalytic Proton acceptor. The segment at 1120–1147 (TLVSSNEGDRAASEPKGSATAAPARGSA) is disordered.

This sequence belongs to the ribonucleoside diphosphate reductase class-2 family. The cofactor is adenosylcob(III)alamin.

It carries out the reaction a 2'-deoxyribonucleoside 5'-diphosphate + [thioredoxin]-disulfide + H2O = a ribonucleoside 5'-diphosphate + [thioredoxin]-dithiol. Functionally, catalyzes the reduction of ribonucleotides to deoxyribonucleotides. May function to provide a pool of deoxyribonucleotide precursors for DNA repair during oxygen limitation and/or for immediate growth after restoration of oxygen. The protein is Vitamin B12-dependent ribonucleotide reductase (nrdJ) of Agrobacterium fabrum (strain C58 / ATCC 33970) (Agrobacterium tumefaciens (strain C58)).